The sequence spans 130 residues: Keratin-associated protein 12-1 (130 aa).

14 repeat units span residues 10-14, 15-29, 34-38, 40-44, 45-49, 60-64, 85-89, 90-94, 95-99, 104-108, 109-113, 114-118, 119-123, and 124-128. The 14 X 5 AA approximate repeats stretch occupies residues 10 to 128; it reads CQPSCCVSSS…CKPVTCSNPS (119 aa).

This sequence belongs to the KRTAP type 12 family. As to quaternary structure, interacts with hair keratins. As to expression, expressed only in the head and back skin of a 3 day old mouse. Not expressed in adult skin.

Its function is as follows. In the hair cortex, hair keratin intermediate filaments are embedded in an interfilamentous matrix, consisting of hair keratin-associated proteins (KRTAP), which are essential for the formation of a rigid and resistant hair shaft through their extensive disulfide bond cross-linking with abundant cysteine residues of hair keratins. The matrix proteins include the high-sulfur and high-glycine-tyrosine keratins. The chain is Keratin-associated protein 12-1 from Mus musculus (Mouse).